The chain runs to 491 residues: Probable glycine dehydrogenase (decarboxylating) subunit 2 (491 aa).

Position 274 is an N6-(pyridoxal phosphate)lysine (K274).

This sequence belongs to the GcvP family. C-terminal subunit subfamily. The glycine cleavage system is composed of four proteins: P, T, L and H. In this organism, the P 'protein' is a heterodimer of two subunits. The cofactor is pyridoxal 5'-phosphate.

It catalyses the reaction N(6)-[(R)-lipoyl]-L-lysyl-[glycine-cleavage complex H protein] + glycine + H(+) = N(6)-[(R)-S(8)-aminomethyldihydrolipoyl]-L-lysyl-[glycine-cleavage complex H protein] + CO2. Functionally, the glycine cleavage system catalyzes the degradation of glycine. The P protein binds the alpha-amino group of glycine through its pyridoxal phosphate cofactor; CO(2) is released and the remaining methylamine moiety is then transferred to the lipoamide cofactor of the H protein. The chain is Probable glycine dehydrogenase (decarboxylating) subunit 2 from Shouchella clausii (strain KSM-K16) (Alkalihalobacillus clausii).